The sequence spans 311 residues: Glycine--tRNA ligase alpha subunit (311 aa).

It belongs to the class-II aminoacyl-tRNA synthetase family. In terms of assembly, tetramer of two alpha and two beta subunits.

The protein resides in the cytoplasm. It carries out the reaction tRNA(Gly) + glycine + ATP = glycyl-tRNA(Gly) + AMP + diphosphate. In Rhizobium meliloti (strain 1021) (Ensifer meliloti), this protein is Glycine--tRNA ligase alpha subunit.